Consider the following 191-residue polypeptide: Thymidylate kinase (191 aa).

An ATP-binding site is contributed by 7–14 (GIDTCGKS).

This sequence belongs to the thymidylate kinase family.

It carries out the reaction dTMP + ATP = dTDP + ADP. In terms of biological role, phosphorylation of dTMP to form dTDP in both de novo and salvage pathways of dTTP synthesis. The sequence is that of Thymidylate kinase from Sulfurovum sp. (strain NBC37-1).